Reading from the N-terminus, the 327-residue chain is GTP 3',8-cyclase (327 aa).

In terms of domain architecture, Radical SAM core spans 4–226; it reads AFARDIHYLR…LRLGDHPGIR (223 aa). Residue R13 participates in GTP binding. [4Fe-4S] cluster-binding residues include C20 and C24. Position 26 (Y26) interacts with S-adenosyl-L-methionine. A [4Fe-4S] cluster-binding site is contributed by C27. R63 provides a ligand contact to GTP. G67 is an S-adenosyl-L-methionine binding site. Residue T94 coordinates GTP. S-adenosyl-L-methionine is bound at residue S118. K155 contacts GTP. An S-adenosyl-L-methionine-binding site is contributed by M189. C254 and C257 together coordinate [4Fe-4S] cluster. 259-261 serves as a coordination point for GTP; it reads RLR. C271 is a [4Fe-4S] cluster binding site.

It belongs to the radical SAM superfamily. MoaA family. Monomer and homodimer. [4Fe-4S] cluster serves as cofactor.

The enzyme catalyses GTP + AH2 + S-adenosyl-L-methionine = (8S)-3',8-cyclo-7,8-dihydroguanosine 5'-triphosphate + 5'-deoxyadenosine + L-methionine + A + H(+). It functions in the pathway cofactor biosynthesis; molybdopterin biosynthesis. Its function is as follows. Catalyzes the cyclization of GTP to (8S)-3',8-cyclo-7,8-dihydroguanosine 5'-triphosphate. The sequence is that of GTP 3',8-cyclase from Heliobacterium modesticaldum (strain ATCC 51547 / Ice1).